The chain runs to 135 residues: Small ribosomal subunit protein uS11 (135 aa).

Belongs to the universal ribosomal protein uS11 family. As to quaternary structure, part of the 30S ribosomal subunit. Interacts with proteins S7 and S18. Binds to IF-3.

Functionally, located on the platform of the 30S subunit, it bridges several disparate RNA helices of the 16S rRNA. Forms part of the Shine-Dalgarno cleft in the 70S ribosome. This Protochlamydia amoebophila (strain UWE25) protein is Small ribosomal subunit protein uS11.